Here is a 515-residue protein sequence, read N- to C-terminus: Bifunctional purine biosynthesis protein PurH (515 aa).

An MGS-like domain is found at 1–145 (MTKRALISVS…KNHASVTVVV (145 aa)).

The protein belongs to the PurH family.

It catalyses the reaction (6R)-10-formyltetrahydrofolate + 5-amino-1-(5-phospho-beta-D-ribosyl)imidazole-4-carboxamide = 5-formamido-1-(5-phospho-D-ribosyl)imidazole-4-carboxamide + (6S)-5,6,7,8-tetrahydrofolate. It carries out the reaction IMP + H2O = 5-formamido-1-(5-phospho-D-ribosyl)imidazole-4-carboxamide. It participates in purine metabolism; IMP biosynthesis via de novo pathway; 5-formamido-1-(5-phospho-D-ribosyl)imidazole-4-carboxamide from 5-amino-1-(5-phospho-D-ribosyl)imidazole-4-carboxamide (10-formyl THF route): step 1/1. It functions in the pathway purine metabolism; IMP biosynthesis via de novo pathway; IMP from 5-formamido-1-(5-phospho-D-ribosyl)imidazole-4-carboxamide: step 1/1. The protein is Bifunctional purine biosynthesis protein PurH of Streptococcus pyogenes serotype M2 (strain MGAS10270).